Consider the following 253-residue polypeptide: Phosphate import ATP-binding protein PstB 3 (253 aa).

Residues 8-248 (LVINNLDLYY…PQDERTENYI (241 aa)) enclose the ABC transporter domain. 40–47 (GPSGCGKS) is a binding site for ATP.

It belongs to the ABC transporter superfamily. Phosphate importer (TC 3.A.1.7) family. In terms of assembly, the complex is composed of two ATP-binding proteins (PstB), two transmembrane proteins (PstC and PstA) and a solute-binding protein (PstS).

Its subcellular location is the cell membrane. It carries out the reaction phosphate(out) + ATP + H2O = ADP + 2 phosphate(in) + H(+). Its function is as follows. Part of the ABC transporter complex PstSACB involved in phosphate import. Responsible for energy coupling to the transport system. The protein is Phosphate import ATP-binding protein PstB 3 of Streptococcus agalactiae serotype III (strain NEM316).